Here is a 49-residue protein sequence, read N- to C-terminus: Large ribosomal subunit protein bL33 (49 aa).

The protein belongs to the bacterial ribosomal protein bL33 family.

This Thermotoga maritima (strain ATCC 43589 / DSM 3109 / JCM 10099 / NBRC 100826 / MSB8) protein is Large ribosomal subunit protein bL33 (rpmG).